A 486-amino-acid chain; its full sequence is Shutoff alkaline exonuclease (486 aa).

This sequence belongs to the herpesviridae alkaline nuclease family. In terms of assembly, forms a complex with the DNA polymerase, the DNA polymerase processivity factor, and the major DNA binding protein.

Its subcellular location is the host nucleus. It localises to the host cytoplasm. Its function is as follows. Plays a role in processing non linear or branched viral DNA intermediates in order to promote the production of mature packaged unit-length linear progeny viral DNA molecules. Exhibits endonuclease and exonuclease activities and accepts both double-stranded and single-stranded DNA as substrate. Exonuclease digestion of DNA is in the 5'-&gt; 3' direction and the products are 5'-monophosphate nucleosides. Additionally, forms a recombinase with the major DNA-binding protein, which displays strand exchange activity. Also acts as a cytoplasmic RNA endonuclease that induces degradation of the majority of the cellular messenger RNAs during early lytic infection. The resulting inhibition of cellular protein synthesis serves to ensure maximal viral gene expression and evasion from host immune response. Internally cleaves host mRNAs which are then degraded by the cellular exonuclease XRN1. Bypasses therefore the regulatory steps of deadenylation and decapping normally required for XRN1 activation. In addition, inhibits host inflammasome activation to promote viral lytic replication by interacting with host AIM2 and disrupting its polymerization. This is Shutoff alkaline exonuclease (ORF37) from Human herpesvirus 8 type P (isolate GK18) (HHV-8).